The chain runs to 317 residues: Adenosine receptor A3 (317 aa).

Residues 1-14 are Extracellular-facing; sequence MPVNSTAVSWTSVT. Asparagine 4 carries an N-linked (GlcNAc...) asparagine glycan. A helical transmembrane segment spans residues 15–37; the sequence is YITVEILIGLCAIVGNVLVIWVV. Topologically, residues 38–48 are cytoplasmic; it reads KLNPSLQTTTF. A helical membrane pass occupies residues 49–72; sequence YFIVSLALADIAVGVLVMPLAIVI. Residues 73–84 lie on the Extracellular side of the membrane; that stretch reads SLGVTIHFYSCL. Cysteine 83 and cysteine 165 are disulfide-bonded. The helical transmembrane segment at 85–106 threads the bilayer; that stretch reads FMTCLMLIFTHASIMSLLAIAV. Residues 107-126 lie on the Cytoplasmic side of the membrane; sequence DRYLRVKLTVRYRRVTTQRR. Residues 127-148 form a helical membrane-spanning segment; that stretch reads IWLALGLCWLVSFLVGLTPMFG. The Extracellular segment spans residues 149-176; the sequence is WNMKLSSADENLTFLPCRFRSVMRMDYM. Asparagine 159 carries an N-linked (GlcNAc...) asparagine glycan. Residues 177-197 traverse the membrane as a helical segment; that stretch reads VYFSFFLWILVPLVVMCAIYF. The Cytoplasmic portion of the chain corresponds to 198–230; that stretch reads DIFYIIRNRLSQSFSGSRETGAFYGREFKTAKS. Residues 231–254 form a helical membrane-spanning segment; it reads LLLVLFLFALCWLPLSIINCILYF. The Extracellular segment spans residues 255-260; sequence DGQVPQ. Residues 261–283 form a helical membrane-spanning segment; the sequence is TVLYLGILLSHANSMMNPIVYAY. The Cytoplasmic portion of the chain corresponds to 284-317; that stretch reads KIKKFKETYLLILKACVMCQPSKSMDPSTEQTSE. Cysteine 302 carries the S-palmitoyl cysteine lipid modification.

The protein belongs to the G-protein coupled receptor 1 family. Post-translationally, phosphorylation on Thr-315 and Ser-316 may be crucial for rapid desensitization. Phosphorylation on Thr-315 may be necessary for phosphorylation on Ser-316 to occur. As to expression, most abundant in lung, spleen and pineal gland. Moderate expression in brain, kidney and testis.

Its subcellular location is the cell membrane. Its function is as follows. Receptor for adenosine. The activity of this receptor is mediated by G proteins which inhibits adenylyl cyclase. The chain is Adenosine receptor A3 (ADORA3) from Ovis aries (Sheep).